We begin with the raw amino-acid sequence, 228 residues long: Dehydrin Rab25 (228 aa).

2 disordered regions span residues 1-68 (MAEH…EAPH) and 115-228 (AGVT…HGHH). Composition is skewed to basic and acidic residues over residues 169–187 (KEKIKEKLPGSHKQEEQKQ) and 212–228 (KGIVEKIKEKLPGHGHH).

This sequence belongs to the plant dehydrin family.

This Oryza sativa subsp. japonica (Rice) protein is Dehydrin Rab25 (RAB25).